We begin with the raw amino-acid sequence, 341 residues long: Cell wall mannoprotein PIR1 (341 aa).

The N-terminal stretch at 1–18 is a signal peptide; it reads MQYKKSLVASALVTTSLA. Positions 19 to 63 are excised as a propeptide; sequence AYAPKDPWSTLTPSATYKGGITDYSSTFGIAVEPIATTASSKAKR. PIR1/2/3 repeat units lie at residues 64-82, 83-101, 102-120, 126-144, 145-163, 164-182, 183-201, and 202-220; these read AAAISQIGDGQIQATTKTT, AAAVSQIGDGQIQATTKTK, AAAVSQIGDGQIQATTKTT, AAAVSQIGDGQIQATTNTT, and VAPVSQITDGQIQATTLTS.

The protein belongs to the PIR protein family. In terms of processing, covalently linked to beta-1,3-glucan of the inner cell wall layer via an alkali-sensitive ester linkage between the gamma-carboxyl group of glutamic acids, arising from specific glutamines within the PIR1/2/3 repeats, and hydroxyl groups of glucoses of beta-1,3-glucan chains. Post-translationally, O-glycosylated. Extensively O-mannosylated.

The protein resides in the secreted. It localises to the cell wall. In terms of biological role, component of the outer cell wall layer. Required for stability of the cell wall and for optimal growth. Required for resistance against several antifungal and cell wall-perturbing agents and for tolerance to heat shock. This is Cell wall mannoprotein PIR1 (PIR1) from Saccharomyces cerevisiae (strain RM11-1a) (Baker's yeast).